An 80-amino-acid chain; its full sequence is Omega-conotoxin-like 1 (80 aa).

The signal sequence occupies residues 1-22; sequence MKLTCVLIVVVLFLTACQLITT. The propeptide occupies 23–49; the sequence is DDSTGKQRYQAWKLRSKMQNSVLSRLS. 3 cysteine pairs are disulfide-bonded: Cys52-Cys66, Cys59-Cys70, and Cys65-Cys79.

The protein belongs to the conotoxin O1 superfamily. Peptide predicted to begin at Arg-51, but it seems more probable that it begins at Cys-52, since this position corresponds to a dibasic residue cleavage. In terms of tissue distribution, expressed by the venom duct.

It is found in the secreted. Functionally, omega-conotoxins act at presynaptic membranes, they bind and block voltage-gated calcium channels (Cav). The polypeptide is Omega-conotoxin-like 1 (Conus capitaneus (Captain cone)).